The sequence spans 96 residues: Citrate lyase acyl carrier protein (96 aa).

Position 14 is an O-(phosphoribosyl dephospho-coenzyme A)serine (Ser14).

The protein belongs to the CitD family. Oligomer with a subunit composition of (alpha,beta,gamma)6.

It localises to the cytoplasm. In terms of biological role, covalent carrier of the coenzyme of citrate lyase. This Pectobacterium carotovorum subsp. carotovorum (strain PC1) protein is Citrate lyase acyl carrier protein.